The sequence spans 299 residues: Regucalcin (299 aa).

Residue E18 coordinates a divalent metal cation. Substrate contacts are provided by R101, N103, and E121. K144 carries the post-translational modification N6-succinyllysine. A divalent metal cation is bound by residues N154 and D204. D204 acts as the Proton donor/acceptor in catalysis. Residues K244 and K253 each carry the N6-succinyllysine modification.

This sequence belongs to the SMP-30/CGR1 family. In terms of assembly, monomer. The cofactor is Zn(2+). Requires Mn(2+) as cofactor. It depends on Ca(2+) as a cofactor. Mg(2+) serves as cofactor. In terms of tissue distribution, mainly present in the liver. Weak expression was found in the brain, lung and kidney.

It localises to the cytoplasm. It catalyses the reaction D-glucono-1,5-lactone + H2O = D-gluconate + H(+). It participates in cofactor biosynthesis; L-ascorbate biosynthesis via UDP-alpha-D-glucuronate pathway; L-ascorbate from UDP-alpha-D-glucuronate: step 3/4. In terms of biological role, gluconolactonase with low activity towards other sugar lactones, including gulonolactone and galactonolactone. Catalyzes a key step in ascorbic acid (vitamin C) biosynthesis. Can also hydrolyze diisopropyl phosphorofluoridate and phenylacetate (in vitro). Calcium-binding protein. Modulates Ca(2+) signaling, and Ca(2+)-dependent cellular processes and enzyme activities. The chain is Regucalcin (Rgn) from Mus musculus (Mouse).